The chain runs to 284 residues: Acetyl-coenzyme A carboxylase carboxyl transferase subunit beta (284 aa).

In terms of domain architecture, CoA carboxyltransferase N-terminal spans phenylalanine 31 to lysine 284. Residues cysteine 35, cysteine 38, cysteine 54, and cysteine 57 each contribute to the Zn(2+) site. A C4-type zinc finger spans residues cysteine 35–cysteine 57.

It belongs to the AccD/PCCB family. Acetyl-CoA carboxylase is a heterohexamer composed of biotin carboxyl carrier protein (AccB), biotin carboxylase (AccC) and two subunits each of ACCase subunit alpha (AccA) and ACCase subunit beta (AccD). Zn(2+) serves as cofactor.

It is found in the cytoplasm. It carries out the reaction N(6)-carboxybiotinyl-L-lysyl-[protein] + acetyl-CoA = N(6)-biotinyl-L-lysyl-[protein] + malonyl-CoA. It functions in the pathway lipid metabolism; malonyl-CoA biosynthesis; malonyl-CoA from acetyl-CoA: step 1/1. In terms of biological role, component of the acetyl coenzyme A carboxylase (ACC) complex. Biotin carboxylase (BC) catalyzes the carboxylation of biotin on its carrier protein (BCCP) and then the CO(2) group is transferred by the transcarboxylase to acetyl-CoA to form malonyl-CoA. This chain is Acetyl-coenzyme A carboxylase carboxyl transferase subunit beta, found in Clostridioides difficile (strain 630) (Peptoclostridium difficile).